Consider the following 26-residue polypeptide: AMP deaminase 1 (26 aa).

The protein belongs to the metallo-dependent hydrolases superfamily. Adenosine and AMP deaminases family. Homotetramer.

It carries out the reaction AMP + H2O + H(+) = IMP + NH4(+). The protein operates within purine metabolism; IMP biosynthesis via salvage pathway; IMP from AMP: step 1/1. In terms of biological role, AMP deaminase plays a critical role in energy metabolism. In Gallus gallus (Chicken), this protein is AMP deaminase 1 (AMPD1).